The sequence spans 318 residues: Biotin synthase (318 aa).

One can recognise a Radical SAM core domain in the interval 36 to 258 (HDPREVQLCT…VATTRILFPD (223 aa)). Positions 54, 58, and 61 each coordinate [4Fe-4S] cluster. Cysteine 98, cysteine 130, cysteine 190, and arginine 262 together coordinate [2Fe-2S] cluster.

The protein belongs to the radical SAM superfamily. Biotin synthase family. In terms of assembly, homodimer. [4Fe-4S] cluster serves as cofactor. The cofactor is [2Fe-2S] cluster.

The catalysed reaction is (4R,5S)-dethiobiotin + (sulfur carrier)-SH + 2 reduced [2Fe-2S]-[ferredoxin] + 2 S-adenosyl-L-methionine = (sulfur carrier)-H + biotin + 2 5'-deoxyadenosine + 2 L-methionine + 2 oxidized [2Fe-2S]-[ferredoxin]. Its pathway is cofactor biosynthesis; biotin biosynthesis; biotin from 7,8-diaminononanoate: step 2/2. Functionally, catalyzes the conversion of dethiobiotin (DTB) to biotin by the insertion of a sulfur atom into dethiobiotin via a radical-based mechanism. The polypeptide is Biotin synthase (Gloeobacter violaceus (strain ATCC 29082 / PCC 7421)).